We begin with the raw amino-acid sequence, 401 residues long: UDP-N-acetylglucosamine--N-acetylmuramyl-(pentapeptide) pyrophosphoryl-undecaprenol N-acetylglucosamine transferase (401 aa).

The interval 1-24 (MTRISVPAGQERNDGGISVPAGQE) is disordered. Residues 39–41 (TAG), Asn157, Arg194, Ser228, and Gln324 contribute to the UDP-N-acetyl-alpha-D-glucosamine site.

Belongs to the glycosyltransferase 28 family. MurG subfamily.

The protein resides in the cell membrane. It carries out the reaction di-trans,octa-cis-undecaprenyl diphospho-N-acetyl-alpha-D-muramoyl-L-alanyl-D-glutamyl-meso-2,6-diaminopimeloyl-D-alanyl-D-alanine + UDP-N-acetyl-alpha-D-glucosamine = di-trans,octa-cis-undecaprenyl diphospho-[N-acetyl-alpha-D-glucosaminyl-(1-&gt;4)]-N-acetyl-alpha-D-muramoyl-L-alanyl-D-glutamyl-meso-2,6-diaminopimeloyl-D-alanyl-D-alanine + UDP + H(+). Its pathway is cell wall biogenesis; peptidoglycan biosynthesis. Functionally, cell wall formation. Catalyzes the transfer of a GlcNAc subunit on undecaprenyl-pyrophosphoryl-MurNAc-pentapeptide (lipid intermediate I) to form undecaprenyl-pyrophosphoryl-MurNAc-(pentapeptide)GlcNAc (lipid intermediate II). The chain is UDP-N-acetylglucosamine--N-acetylmuramyl-(pentapeptide) pyrophosphoryl-undecaprenol N-acetylglucosamine transferase from Mycolicibacterium vanbaalenii (strain DSM 7251 / JCM 13017 / BCRC 16820 / KCTC 9966 / NRRL B-24157 / PYR-1) (Mycobacterium vanbaalenii).